The following is a 155-amino-acid chain: Small ribosomal subunit protein uS7cz/uS7cy (155 aa).

The protein belongs to the universal ribosomal protein uS7 family. As to quaternary structure, part of the 30S ribosomal subunit.

The protein localises to the plastid. It is found in the chloroplast. One of the primary rRNA binding proteins, it binds directly to 16S rRNA where it nucleates assembly of the head domain of the 30S subunit. This chain is Small ribosomal subunit protein uS7cz/uS7cy (rps7-A), found in Crucihimalaya wallichii (Rock-cress).